Here is a 240-residue protein sequence, read N- to C-terminus: UPF0502 protein Veis_2102 (240 aa).

Belongs to the UPF0502 family.

The chain is UPF0502 protein Veis_2102 from Verminephrobacter eiseniae (strain EF01-2).